The sequence spans 968 residues: RNA polymerase-associated protein RapA (968 aa).

A Helicase ATP-binding domain is found at 163–332 (EVGRRYAPRV…FARLRLLDPD (170 aa)). ATP is bound at residue 176 to 183 (DEVGLGKT). The DEAH box motif lies at 278–281 (DEAH). In terms of domain architecture, Helicase C-terminal spans 491-655 (RVDWLIEFLK…EFAEDLLNVL (165 aa)).

The protein belongs to the SNF2/RAD54 helicase family. RapA subfamily. As to quaternary structure, interacts with the RNAP. Has a higher affinity for the core RNAP than for the holoenzyme. Its ATPase activity is stimulated by binding to RNAP.

In terms of biological role, transcription regulator that activates transcription by stimulating RNA polymerase (RNAP) recycling in case of stress conditions such as supercoiled DNA or high salt concentrations. Probably acts by releasing the RNAP, when it is trapped or immobilized on tightly supercoiled DNA. Does not activate transcription on linear DNA. Probably not involved in DNA repair. This is RNA polymerase-associated protein RapA from Shewanella baltica (strain OS223).